Consider the following 865-residue polypeptide: Alanine--tRNA ligase (865 aa).

Zn(2+)-binding residues include His554, His558, Cys656, and His660.

Belongs to the class-II aminoacyl-tRNA synthetase family. Zn(2+) serves as cofactor.

Its subcellular location is the cytoplasm. It carries out the reaction tRNA(Ala) + L-alanine + ATP = L-alanyl-tRNA(Ala) + AMP + diphosphate. In terms of biological role, catalyzes the attachment of alanine to tRNA(Ala) in a two-step reaction: alanine is first activated by ATP to form Ala-AMP and then transferred to the acceptor end of tRNA(Ala). Also edits incorrectly charged Ser-tRNA(Ala) and Gly-tRNA(Ala) via its editing domain. The polypeptide is Alanine--tRNA ligase (Francisella tularensis subsp. tularensis (strain WY96-3418)).